The following is a 1481-amino-acid chain: Cystic fibrosis transmembrane conductance regulator (1481 aa).

The Cytoplasmic portion of the chain corresponds to 1–77; sequence MQRSPLEKAS…KLINALRRCF (77 aa). Residues 78 to 98 form a helical membrane-spanning segment; sequence FWRFMFYGILLYLGEVTKAVQ. Residues 81–365 form the ABC transmembrane type-1 1 domain; the sequence is FMFYGILLYL…WAVQTWYDSL (285 aa). Over 99–122 the chain is Extracellular; the sequence is PLLLGRIIASYDPDNKEERSIAIY. The helical transmembrane segment at 123 to 146 threads the bilayer; sequence LGIGLCLLFIVRTLLLHPAIFGLH. Residues 147-195 lie on the Cytoplasmic side of the membrane; that stretch reads HIGMQMRIAMFSLIYKKTLKLSSRVLDKISIGQLVSLLSNNLNKFDEGL. The chain crosses the membrane as a helical span at residues 196-216; that stretch reads ALAHFVWIVPLQVALLMGLIW. The Extracellular portion of the chain corresponds to 217–222; the sequence is ELLQAS. The helical transmembrane segment at 223 to 243 threads the bilayer; it reads AFCGLGFLIVLALFQAGLGRM. The Cytoplasmic portion of the chain corresponds to 244–298; sequence MMKYRDQRAGKINERLVITSEMIENIQSVKAYCWEEAMEKMIENLRQTELKLTRK. Residues 299-319 form a helical membrane-spanning segment; it reads AAYVRYFNSSAFFFSGFFVVF. Residues 320-339 are Extracellular-facing; that stretch reads LSVLPYALIKGIVLRKIFTT. Residues 340–358 form a helical membrane-spanning segment; sequence ISFCIVLRMAVTRQFPWAV. Residues 359-858 lie on the Cytoplasmic side of the membrane; the sequence is QTWYDSLGAI…YLRYITVHKS (500 aa). ATP is bound by residues Trp-401, Ser-434, 458-465, and Gln-493; that span reads GSTGAGKT. Positions 423–646 constitute an ABC transporter 1 domain; sequence NDDDSLFFSN…RPDFSSKLMG (224 aa). Cys-524 is lipidated: S-palmitoyl cysteine. A phosphoserine mark is found at Ser-549 and Ser-660. Positions 654-831 are disordered R region; sequence SAERRNSILT…EEINEEDLKE (178 aa). Ser-670 is modified (phosphoserine; by PKA). A Phosphoserine modification is found at Ser-686. Lys-688 participates in a covalent cross-link: Glycyl lysine isopeptide (Lys-Gly) (interchain with G-Cter in ubiquitin). Residues Ser-700 and Ser-712 each carry the phosphoserine modification. Thr-717 is modified (phosphothreonine). Phosphoserine is present on residues Ser-737, Ser-753, Ser-768, Ser-790, Ser-795, and Ser-813. The chain crosses the membrane as a helical span at residues 859 to 879; sequence LIFVLIWCLVIFLAEVAASLV. The ABC transmembrane type-1 2 domain occupies 859–1155; the sequence is LIFVLIWCLV…AVNSSIDVDS (297 aa). Topologically, residues 880–918 are extracellular; it reads VLWFLGNTPPQDKGNSTYSRNNSYAVIITRTSSYYVFYI. 2 N-linked (GlcNAc...) asparagine glycosylation sites follow: Asn-894 and Asn-900. Residues 919 to 939 traverse the membrane as a discontinuously helical segment; the sequence is YVGVADTLLAMGFFRGLPLVH. At 940–990 the chain is on the cytoplasmic side; that stretch reads TLITVSKILHHKMLHSVLQAPMSTLNTLKAGGILNRFSKDIAILDDLLPLT. A helical membrane pass occupies residues 991-1011; the sequence is IFDFIQLLLIVIGAIAVVAVL. Residues 1012–1013 lie on the Extracellular side of the membrane; sequence QP. Residues 1014-1034 traverse the membrane as a helical segment; sequence YIFVATVPVIVAFIMLRAYFL. Residues 1035–1095 lie on the Cytoplasmic side of the membrane; sequence QTSQQLKQLE…TANWFLYLST (61 aa). The chain crosses the membrane as a helical span at residues 1096 to 1116; the sequence is LRWFQMRIEMIFVIFFIAVTF. Residues 1117–1130 are Extracellular-facing; sequence ISILTTGEGEGTVG. A helical membrane pass occupies residues 1131–1151; sequence IILTLAMNIMSTLQWAVNSSI. Over 1152 to 1481 the chain is Cytoplasmic; sequence DVDSLMRSVS…TEEEVQDTRL (330 aa). Residues 1211-1444 enclose the ABC transporter 2 domain; the sequence is MTVKDLTAKY…RSLFRQAISP (234 aa). ATP-binding positions include Tyr-1220 and 1245 to 1252; that span reads GRTGSGKS. The interval 1387–1481 is interaction with GORASP2; it reads RTLKQAFADC…TEEEVQDTRL (95 aa). The S-palmitoyl cysteine moiety is linked to residue Cys-1396. Residues Ser-1445 and Ser-1457 each carry the phosphoserine modification. The tract at residues 1462-1481 is disordered; the sequence is QPQIAALKEETEEEVQDTRL. Over residues 1471–1481 the composition is skewed to acidic residues; it reads ETEEEVQDTRL. A PDZ-binding motif is present at residues 1479-1481; sequence TRL.

This sequence belongs to the ABC transporter superfamily. ABCC family. CFTR transporter (TC 3.A.1.202) subfamily. Monomer; does not require oligomerization for channel activity. May form oligomers in the membrane. Interacts with SLC26A3, SLC26A6 and NHERF1. Interacts with SHANK2. Interacts with MYO6. Interacts (via C-terminus) with GOPC (via PDZ domain); this promotes CFTR internalization and thereby decreases channel activity. Interacts with SLC4A7 through NHERF1. Found in a complex with MYO5B and RAB11A. Interacts with ANO1. Interacts with SLC26A8. Interacts with AHCYL1; the interaction increases CFTR activity. Interacts with CSE1L. The core-glycosylated form interacts with GORASP2 (via PDZ GRASP-type 1 domain) in respone to ER stress. Interacts with MARCHF2; the interaction leads to CFTR ubiqtuitination and degradation. Interacts with ADGRG2. In terms of processing, N-glycosylated. Post-translationally, phosphorylated; cAMP treatment promotes phosphorylation and activates the channel. Dephosphorylation decreases the ATPase activity (in vitro). Phosphorylation at PKA sites activates the channel. Phosphorylation at PKC sites enhances the response to phosphorylation by PKA. Phosphorylated by AMPK; this inhibits channel activity. Ubiquitinated, leading to its degradation in the lysosome. Deubiquitination by USP10 in early endosomes enhances its endocytic recycling to the cell membrane. Ubiquitinated by RNF185 during ER stress. Ubiquitinated by MARCHF2.

The protein localises to the apical cell membrane. Its subcellular location is the early endosome membrane. It is found in the cell membrane. The protein resides in the recycling endosome membrane. It localises to the endoplasmic reticulum membrane. The protein localises to the nucleus. The catalysed reaction is ATP + H2O + closed Cl(-) channel = ADP + phosphate + open Cl(-) channel.. It carries out the reaction chloride(in) = chloride(out). The enzyme catalyses hydrogencarbonate(in) = hydrogencarbonate(out). It catalyses the reaction ATP + H2O = ADP + phosphate + H(+). Epithelial ion channel that plays an important role in the regulation of epithelial ion and water transport and fluid homeostasis. Mediates the transport of chloride ions across the cell membrane. Possesses an intrinsic ATPase activity and utilizes ATP to gate its channel; the passive flow of anions through the channel is gated by cycles of ATP binding and hydrolysis by the ATP-binding domains. The ion channel is also permeable to HCO(3)(-); selectivity depends on the extracellular chloride concentration. Exerts its function also by modulating the activity of other ion channels and transporters. Contributes to the regulation of the pH and the ion content of the epithelial fluid layer. Modulates the activity of the epithelial sodium channel (ENaC) complex, in part by regulating the cell surface expression of the ENaC complex. May regulate bicarbonate secretion and salvage in epithelial cells by regulating the transporter SLC4A7. Can inhibit the chloride channel activity of ANO1. Plays a role in the chloride and bicarbonate homeostasis during sperm epididymal maturation and capacitation. This is Cystic fibrosis transmembrane conductance regulator from Papio anubis (Olive baboon).